A 91-amino-acid polypeptide reads, in one-letter code: UPF0335 protein BRADO1188 (91 aa).

Belongs to the UPF0335 family.

The chain is UPF0335 protein BRADO1188 from Bradyrhizobium sp. (strain ORS 278).